Here is a 493-residue protein sequence, read N- to C-terminus: MRPLCMTYWWLGLLATVGAATGPEADVEGTEDGSQREYIYLNRYKRAGESPDKCTYTFIVPQQRVTGAICVNSKEPEVHLENRVHKQELELLNNELLKQKRQIETLQQLVEVDGGIVSEVKLLRKESRNMNSRVTQLYMQLLHEIIRKRDNALELSQLENRILNQTADMLQLASKYKDLEHKFQHLAMLAHNQSEVIAQLEEHCQRVPAARPMPQPPPAAPPRVYQPPTYNRIINQISTNEIQSDQNLKVLPPSLPTMPALTSLPSSTDKPSGPWRDCLQALEDGHSTSSIYLVKPENTNRLMQVWCDQRHDPGGWTVIQRRLDGSVNFFRNWETYKQGFGNIDGEYWLGLENIYWLTNQGNYKLLVTMEDWSGRKVFAEYASFRLEPESEYYKLRLGRYHGNAGDSFTWHNGKQFTTLDRDHDVYTGNCAHYQKGGWWYNACAHSNLNGVWYRGGHYRSRYQDGVYWAEFRGGSYSLKKVVMMIRPNPNTFH.

A signal peptide spans 1–19 (MRPLCMTYWWLGLLATVGA). Coiled coils occupy residues 77–115 (EVHL…VDGG) and 152–202 (ALEL…QLEE). 2 N-linked (GlcNAc...) asparagine glycosylation sites follow: N164 and N192. Positions 269–489 (DKPSGPWRDC…KVVMMIRPNP (221 aa)) constitute a Fibrinogen C-terminal domain. 2 cysteine pairs are disulfide-bonded: C278–C307 and C430–C443.

In terms of tissue distribution, widely expressed in heart, tongue, lung and skeletal muscle. Also found in lower levels in kidney, epididymis and testis.

The protein localises to the secreted. Functionally, induces sprouting in endothelial cells through an autocrine and paracrine action. This is Angiopoietin-related protein 2 (Angptl2) from Mus musculus (Mouse).